We begin with the raw amino-acid sequence, 2515 residues long: Polyprotein P1234 (2515 aa).

The Alphavirus-like MT domain maps to 30–260 (VAQQATPNDH…EHRASLQSWH (231 aa)). The interval 245 to 264 (GSTLYPEHRASLQSWHLPSV) is nsP1 membrane-binding. C420 is lipidated: S-palmitoyl cysteine; by host. The 156-residue stretch at 695–850 (ELTNPPYHEL…RDICTKTFYK (156 aa)) folds into the (+)RNA virus helicase ATP-binding domain. An a ribonucleoside 5'-triphosphate-binding site is contributed by 726–733 (GTPGSGKS). One can recognise a (+)RNA virus helicase C-terminal domain in the interval 851–999 (FISRRCTQPV…IEDWEAEHKG (149 aa)). The region spanning 1012–1341 (NPFSCKTNVC…CVISSVYEGT (330 aa)) is the Peptidase C9 domain. Residues 1013–1032 (PFSCKTNVCWAKALEPILAT) are nucleolus localization signal. The active-site For cysteine protease nsP2 activity is C1021. The short motif at 1066–1075 (IKFFGMDLTS) is the Nuclear export signal element. The active-site For cysteine protease nsP2 activity is H1098. The Nuclear localization signal signature appears at 1196-1200 (PHKRI). A Macro domain is found at 1348–1507 (APSYRTKREN…RIDAVLQLKE (160 aa)). ADP-D-ribose contacts are provided by N1371, G1379, G1459, I1460, and Y1461. C1610, C1612, C1635, and C1653 together coordinate Zn(2+). Disordered regions lie at residues 1678-1705 (QPAA…DNTS) and 1777-1797 (LAAA…SSAD). 2 consecutive short sequence motifs (FGDF; binding to host G3BP1) follow at residues 1839–1842 (FGSF) and 1862–1865 (FGSF). The region spanning 2269 to 2384 (DPVLETDIAS…HGVVSDKEMA (116 aa)) is the RdRp catalytic domain.

Interacts with non-structural protein 3. Interacts with RNA-directed RNA polymerase nsP4. Interacts with protease nsP2. interacts with itself. In terms of assembly, interacts with mRNA-capping enzyme nsP1. Interacts with host DDX1. Interacts with host DDX3. Interacts (via C-terminus) with host G3BP1; this interaction inhibits the formation of host stress granules on viral mRNAs and the nsp3-G3BP1 complexes bind viral RNAs and probably orchestrate the assembly of viral replication complexes. Interacts (via C-terminus) with host G3BP2; this interaction inhibits the formation of host stress granules on viral mRNAs and the nsp3-G3BP2 complexes bind viral RNAs and probably orchestrate the assembly of viral replication complexes. As to quaternary structure, interacts with mRNA-capping enzyme nsP1. Interacts with protease nsP2. interacts with itself. Interacts with RNA-directed RNA polymerase nsP4. Interacts with mRNA-capping enzyme nsP1. Interacts with KPNA1/karyopherin-alpha1; this interaction probably allows the active transport of protease nsP2 into the host nucleus. Requires Mg(2+) as cofactor. Mn(2+) serves as cofactor. In terms of processing, specific enzymatic cleavages in vivo yield mature proteins. The processing of the polyprotein is temporally regulated. In early stages (1.7 hpi), P1234 is first cleaved in trans through its nsP2 protease activity, releasing P123' and nsP4, which associate to form the early replication complex. At the same time, P1234 is also cut at the nsP1/nsP2 site early in infection but with lower efficiency. After replication of the viral minus-strand RNAs (4 hpi), the polyproteins are cut at the nsP1/nsP2 and nsP2/nsP3 sites very efficiently, preventing accumulation of P123' and P1234 and allowing the formation of the late replication complex. NsP3'/nsP4 site is not cleaved anymore and P34 is produced rather than nsP4. Post-translationally, specific enzymatic cleavages in vivo yield mature proteins. The processing of the polyprotein is temporally regulated. In early stages (1.7 hpi), P123 is cleaved at the nsP1/nsP2 site with low efficiency. After replication of the viral minus-strand RNAs (4 hpi), the polyproteins are cut at the nsP1/nsP2 and nsP2/nsP3 sites very efficiently, preventing accumulation of P123 and allowing the formation of the late replication complex. Specific enzymatic cleavages in vivo yield mature proteins. The processing of the polyprotein is temporally regulated. In early stages (1.7 hpi), P123' is cleaved at the nsP1/nsP2 site with low efficiency. After replication of the viral minus-strand RNAs (4 hpi), the polyproteins are cut at the nsP1/nsP2 and nsP2/nsP3 sites very efficiently, preventing accumulation of P123' and allowing the formation of the late replication complex. In terms of processing, palmitoylated by host palmitoyltransferases ZDHHC2 and ZDHHC19. Post-translationally, phosphorylated by host on serines and threonines. Ubiquitinated; targets the protein for rapid degradation via the ubiquitin system. Nsp4 is present in extremely low quantities due to low frequency of translation through the amber stop-codon and the degradation by the ubiquitin pathway.

The protein resides in the host cytoplasmic vesicle membrane. It is found in the host cell membrane. It localises to the host cell projection. Its subcellular location is the host filopodium. The protein localises to the host nucleus. The protein resides in the host cytoplasm. The enzyme catalyses GTP + S-adenosyl-L-methionine = N(7)-methyl-GTP + S-adenosyl-L-homocysteine. It carries out the reaction N(7)-methyl-GTP + L-histidyl-[protein] = N(tele)-(N(7)-methylguanosine 5'-phospho)-L-histidyl-[protein] + diphosphate. The catalysed reaction is N(tele)-(N(7)-methylguanosine 5'-phospho)-L-histidyl-[protein] + a 5'-end diphospho-(purine-ribonucleoside) in mRNA + H(+) = a 5'-end (N(7)-methyl 5'-triphosphoguanosine)-(purine-ribonucleoside) in mRNA + L-histidyl-[protein]. It catalyses the reaction a 5'-end triphospho-ribonucleoside in mRNA + H2O = a 5'-end diphospho-ribonucleoside in mRNA + phosphate + H(+). The enzyme catalyses a ribonucleoside 5'-triphosphate + H2O = a ribonucleoside 5'-diphosphate + phosphate + H(+). It carries out the reaction ATP + H2O = ADP + phosphate + H(+). The catalysed reaction is RNA(n) + a ribonucleoside 5'-triphosphate = RNA(n+1) + diphosphate. It catalyses the reaction RNA(n) + ATP = RNA(n)-3'-adenine ribonucleotide + diphosphate. The enzyme catalyses 4-O-(ADP-D-ribosyl)-L-aspartyl-[protein] + H2O = L-aspartyl-[protein] + ADP-D-ribose + H(+). It carries out the reaction 5-O-(ADP-D-ribosyl)-L-glutamyl-[protein] + H2O = L-glutamyl-[protein] + ADP-D-ribose + H(+). The catalysed reaction is ADP-alpha-D-ribose 1''-phosphate + H2O = ADP-D-ribose + phosphate. Inactive precursor of the viral replicase, which is activated by cleavages carried out by the viral protease nsP2. In terms of biological role, the early replication complex formed by the polyprotein P123 and nsP4 synthesizes minus-strand RNAs. As soon P123 is cleaved into mature proteins, the plus-strand RNAs synthesis begins. Its function is as follows. The early replication complex formed by the polyprotein P123' and nsP4 synthesizes minus-strand RNAs. Polyprotein P123' is a short-lived polyprotein that accumulates during early stage of infection. As soon P123' is cleaved into mature proteins, the plus-strand RNAs synthesis begins. Functionally, cytoplasmic capping enzyme that catalyzes two virus-specific reactions: methyltransferase and nsP1 guanylyltransferase. mRNA-capping is necessary since all viral RNAs are synthesized in the cytoplasm, and host capping enzymes are restricted to the nucleus. The enzymatic reaction involves a covalent link between 7-methyl-GMP and nsP1, whereas eukaryotic capping enzymes form a covalent complex only with GMP. nsP1 capping consists in the following reactions: GTP is first methylated into 7-methyl-GMP and then is covalently linked to nsP1 to form the m7GMp-nsP1 complex from which 7-methyl-GMP complex is transferred to the mRNA to create the cap structure. NsP1 is needed for the initiation of the minus-strand RNAs synthesis. Probably serves as a membrane anchor for the replication complex composed of nsP1-nsP4. Palmitoylated nsP1 is remodeling host cell cytoskeleton, and induces filopodium-like structure formation at the surface of the host cell. Interacts with host TMEM45B; this interaction leads to viral replication inhibition. Multifunctional protein whose N-terminus is part of the RNA polymerase complex and displays NTPase, RNA triphosphatase and helicase activities. NTPase and RNA triphosphatase are involved in viral RNA capping and helicase keeps a check on the dsRNA replication intermediates. The C-terminus harbors a protease that specifically cleaves the polyproteins and releases the mature proteins. Required for the shutoff of minus-strand RNAs synthesis. Specifically inhibits the host IFN response by promoting the nuclear export of host STAT1. Also inhibits host transcription by inducing rapid proteasome-dependent degradation of POLR2A, a catalytic subunit of the RNAPII complex. The resulting inhibition of cellular protein synthesis serves to ensure maximal viral gene expression and to evade host immune response. In terms of biological role, seems to be essential for minus-strand RNAs and subgenomic 26S mRNAs synthesis. Displays mono-ADP-ribosylhydrolase activity. ADP-ribosylation is a post-translational modification that controls various processes of the host cell and the virus probably needs to revert it for optimal viral replication. Binds proteins of FXR family and sequesters them into the viral RNA replication complexes thereby inhibiting the formation of host stress granules on viral mRNAs. The nsp3'-FXR complexes bind viral RNAs and probably orchestrate the assembly of viral replication complexes, thanks to the ability of FXR family members to self-assemble and bind DNA. Its function is as follows. Seems to be essential for minus-strand RNAs and subgenomic 26S mRNAs synthesis. Displays mono-ADP-ribosylhydrolase activity. ADP-ribosylation is a post-translantional modification that controls various processes of the host cell and the virus probably needs to revert it for optimal viral replication. Binds proteins of G3BP family and sequesters them into the viral RNA replication complexes thereby inhibiting the formation of host stress granules on viral mRNAs. The nsp3-G3BP complexes bind viral RNAs and probably orchestrate the assembly of viral replication complexes, thanks to the ability of G3BP family members to self-assemble and bind DNA. Functionally, RNA dependent RNA polymerase. Replicates genomic and antigenomic RNA by recognizing replications specific signals. The early replication complex formed by the polyprotein P123 and nsP4 synthesizes minus-strand RNAs. The late replication complex composed of fully processed nsP1-nsP4 is responsible for the production of genomic and subgenomic plus-strand RNAs. The core catalytic domain of nsP4 also possesses terminal adenylyltransferase (TATase) activity that is probably involved in maintenance and repair of the poly(A) tail, an element required for replication of the viral genome. Interacts with host TMEM45B; this interaction leads to viral replication inhibition. The polypeptide is Polyprotein P1234 (Acrocephalus scirpaceus (Eurasian reed-warbler)).